A 69-amino-acid polypeptide reads, in one-letter code: DNA-directed RNA polymerase subunit epsilon (69 aa).

This sequence belongs to the RNA polymerase subunit epsilon family. RNAP is composed of a core of 2 alpha, a beta and a beta' subunit. The core is associated with a delta subunit, and at least one of epsilon or omega. When a sigma factor is associated with the core the holoenzyme is formed, which can initiate transcription.

It carries out the reaction RNA(n) + a ribonucleoside 5'-triphosphate = RNA(n+1) + diphosphate. Functionally, a non-essential component of RNA polymerase (RNAP). The sequence is that of DNA-directed RNA polymerase subunit epsilon from Bacillus pumilus (strain SAFR-032).